A 309-amino-acid chain; its full sequence is Gamma-hemolysin component A (309 aa).

The first 29 residues, 1-29 (MIKNKILTATLAVGLIAPLANPFIEISKA), serve as a signal peptide directing secretion.

This sequence belongs to the aerolysin family. In terms of assembly, toxicity requires sequential binding and synergistic association of a class S and a class F component which form heterooligomeric complexes. HlgA (class S) associates with HlgB (class F) thus forming an AB toxin in strains producing both gamma-hemolysins and leukocidins. HlgA and LukF-PV can also form a complex.

The protein localises to the secreted. Functionally, toxin that seems to act by forming pores in the membrane of the cell. Has a hemolytic and a leucotoxic activity. This Staphylococcus aureus (strain MRSA252) protein is Gamma-hemolysin component A (hlgA).